The sequence spans 97 residues: NELL2-interacting cell ontogeny regulator 1 (97 aa).

A signal peptide spans 1–35 (MAPLPPCGPPRSPPPRLLLLLLLLSATLLGAPARA).

It belongs to the NICOL family. In terms of assembly, interacts with NELL2; triggers epididymal differentiation. Interacts with cell surface receptor TFRC; the interaction mediates uptake of NICOL1 into fibroblasts.

The protein localises to the secreted. It is found in the cytoplasm. Its subcellular location is the perinuclear region. Functionally, mRNA-binding protein which interacts with a range of target mRNAs including SERPINE1, ACTA2, CCN2 and COL4A1 and may promote extracellular matrix production. Binds to the 3'-UTR of SERPINE1 mRNA and stabilizes the mRNA, possibly by competing for binding with SERBP1 and preventing SERBP1-mediated mRNA degradation. Also binds to the 3'-UTR of ACTA2. Testis-derived lumicrine factor that triggers epididymal differentiation and sperm maturation. This chain is NELL2-interacting cell ontogeny regulator 1, found in Bos taurus (Bovine).